The chain runs to 411 residues: Coiled-coil domain-containing protein 159 (411 aa).

The segment at E84–V113 is disordered. A compositionally biased stretch (basic and acidic residues) spans A91 to P102. A coiled-coil region spans residues E269 to T305. Residues R372–A411 are disordered. Polar residues predominate over residues C384–D393.

Interacts with DYNLT2. Interacts with GGNBP1. Interacts with OSBP2. Expressed in spermatids but undetectable in the spermatozoon (at protein level). Highly expressed in the testis (at protein level).

Its function is as follows. Functions during spermatid development; may participate in the centrosome reduction procedure of spermatids and is required for the formation of the connecting piece/sperm head-tail coupling apparatus (HTCA) and the correct and tight attachment of the flagellum to the nuclear envelope. This chain is Coiled-coil domain-containing protein 159 (Ccdc159), found in Mus musculus (Mouse).